Here is a 580-residue protein sequence, read N- to C-terminus: Dihydroxy-acid dehydratase (580 aa).

Residue Asp-95 coordinates Mg(2+). [2Fe-2S] cluster is bound at residue Cys-136. Mg(2+)-binding residues include Asp-137 and Lys-138. At Lys-138 the chain carries N6-carboxylysine. Position 209 (Cys-209) interacts with [2Fe-2S] cluster. Mg(2+) is bound at residue Glu-462. Ser-488 serves as the catalytic Proton acceptor.

This sequence belongs to the IlvD/Edd family. Homodimer. It depends on [2Fe-2S] cluster as a cofactor. Mg(2+) serves as cofactor.

It carries out the reaction (2R)-2,3-dihydroxy-3-methylbutanoate = 3-methyl-2-oxobutanoate + H2O. It catalyses the reaction (2R,3R)-2,3-dihydroxy-3-methylpentanoate = (S)-3-methyl-2-oxopentanoate + H2O. The protein operates within amino-acid biosynthesis; L-isoleucine biosynthesis; L-isoleucine from 2-oxobutanoate: step 3/4. It participates in amino-acid biosynthesis; L-valine biosynthesis; L-valine from pyruvate: step 3/4. Its function is as follows. Functions in the biosynthesis of branched-chain amino acids. Catalyzes the dehydration of (2R,3R)-2,3-dihydroxy-3-methylpentanoate (2,3-dihydroxy-3-methylvalerate) into 2-oxo-3-methylpentanoate (2-oxo-3-methylvalerate) and of (2R)-2,3-dihydroxy-3-methylbutanoate (2,3-dihydroxyisovalerate) into 2-oxo-3-methylbutanoate (2-oxoisovalerate), the penultimate precursor to L-isoleucine and L-valine, respectively. In Leuconostoc mesenteroides subsp. mesenteroides (strain ATCC 8293 / DSM 20343 / BCRC 11652 / CCM 1803 / JCM 6124 / NCDO 523 / NBRC 100496 / NCIMB 8023 / NCTC 12954 / NRRL B-1118 / 37Y), this protein is Dihydroxy-acid dehydratase.